Consider the following 953-residue polypeptide: UPF0746 protein DDB_G0281301 (953 aa).

Residues 1-10 are compositionally biased toward basic and acidic residues; it reads MVNNKRKEIE. The tract at residues 1–23 is disordered; the sequence is MVNNKRKEIENQENDNNDDNDGL. Residues 11–21 are compositionally biased toward acidic residues; it reads NQENDNNDDND. In terms of domain architecture, SAP spans 35–69; that stretch reads YDSIRSKELQTIAKSLGLPIIGKKQEIYKRIEGYF.

This sequence belongs to the UPF0746 family.

This is UPF0746 protein DDB_G0281301 from Dictyostelium discoideum (Social amoeba).